Reading from the N-terminus, the 564-residue chain is Probable metalloprotease ARX1 (564 aa).

It belongs to the peptidase M24 family. As to quaternary structure, component of the nucleoplasmic and cytoplasmic pre-60S ribosomal particles.

It is found in the cytoplasm. Its subcellular location is the nucleus. Its function is as follows. Probable metalloprotease involved in proper assembly of pre-ribosomal particles during the biogenesis of the 60S ribosomal subunit. Accompanies the pre-60S particles to the cytoplasm. This is Probable metalloprotease ARX1 (ARX1) from Debaryomyces hansenii (strain ATCC 36239 / CBS 767 / BCRC 21394 / JCM 1990 / NBRC 0083 / IGC 2968) (Yeast).